Reading from the N-terminus, the 259-residue chain is Proteasome subunit alpha type-7 (259 aa).

Belongs to the peptidase T1A family. The 26S proteasome consists of a 20S proteasome core and two 19S regulatory subunits. The 20S proteasome core is composed of 28 subunits that are arranged in four stacked rings, resulting in a barrel-shaped structure. The two end rings are each formed by seven alpha subunits, and the two central rings are each formed by seven beta subunits. The catalytic chamber with the active sites is on the inside of the barrel.

Its subcellular location is the cytoplasm. The protein resides in the nucleus. Functionally, the proteasome is a multicatalytic proteinase complex which is characterized by its ability to cleave peptides with Arg, Phe, Tyr, Leu, and Glu adjacent to the leaving group at neutral or slightly basic pH. The proteasome has an ATP-dependent proteolytic activity. The protein is Proteasome subunit alpha type-7 (PAD1) of Solanum lycopersicum (Tomato).